Consider the following 102-residue polypeptide: NADH-quinone oxidoreductase subunit K (102 aa).

A run of 3 helical transmembrane segments spans residues 5 to 25 (LSHY…GIFL), 31 to 51 (IVIL…MVAF), and 65 to 85 (LFIL…LVVF).

Belongs to the complex I subunit 4L family. NDH-1 is composed of 14 different subunits. Subunits NuoA, H, J, K, L, M, N constitute the membrane sector of the complex.

It localises to the cell inner membrane. The catalysed reaction is a quinone + NADH + 5 H(+)(in) = a quinol + NAD(+) + 4 H(+)(out). Functionally, NDH-1 shuttles electrons from NADH, via FMN and iron-sulfur (Fe-S) centers, to quinones in the respiratory chain. The immediate electron acceptor for the enzyme in this species is believed to be ubiquinone. Couples the redox reaction to proton translocation (for every two electrons transferred, four hydrogen ions are translocated across the cytoplasmic membrane), and thus conserves the redox energy in a proton gradient. The polypeptide is NADH-quinone oxidoreductase subunit K (Agrobacterium fabrum (strain C58 / ATCC 33970) (Agrobacterium tumefaciens (strain C58))).